A 148-amino-acid chain; its full sequence is Probable transporter PD_1893 (148 aa).

Helical transmembrane passes span 11–31 (FTVA…SEMI), 48–68 (NPSL…GMAL), 93–113 (IVFG…CPGP), and 118–138 (LSTG…GMII).

It belongs to the TsuA/YedE (TC 9.B.102) family.

It is found in the cell inner membrane. The polypeptide is Probable transporter PD_1893 (Xylella fastidiosa (strain Temecula1 / ATCC 700964)).